We begin with the raw amino-acid sequence, 101 residues long: MMLEHVLVLSAYLFSIGIYGLITSRNMVRALMCLELILNAVNMNLVTFSDLFDSRQLKGDIFSIFVIAIAAAEAAIGPAIVSSIYRNRKSTRINQSNLLNK.

Helical transmembrane passes span 2–22 (MLEH…YGLI), 32–52 (MCLE…SDLF), and 61–81 (IFSI…PAIV).

It belongs to the complex I subunit 4L family. As to quaternary structure, NDH is composed of at least 16 different subunits, 5 of which are encoded in the nucleus.

The protein localises to the plastid. Its subcellular location is the chloroplast thylakoid membrane. It catalyses the reaction a plastoquinone + NADH + (n+1) H(+)(in) = a plastoquinol + NAD(+) + n H(+)(out). The catalysed reaction is a plastoquinone + NADPH + (n+1) H(+)(in) = a plastoquinol + NADP(+) + n H(+)(out). Its function is as follows. NDH shuttles electrons from NAD(P)H:plastoquinone, via FMN and iron-sulfur (Fe-S) centers, to quinones in the photosynthetic chain and possibly in a chloroplast respiratory chain. The immediate electron acceptor for the enzyme in this species is believed to be plastoquinone. Couples the redox reaction to proton translocation, and thus conserves the redox energy in a proton gradient. The chain is NAD(P)H-quinone oxidoreductase subunit 4L, chloroplastic from Nymphaea alba (White water-lily).